A 416-amino-acid polypeptide reads, in one-letter code: Basic salivary proline-rich protein 2 (416 aa).

The N-terminal stretch at methionine 1 to alanine 16 is a signal peptide. Glutamine 17 bears the Pyrrolidone carboxylic acid mark. The span at leucine 19–serine 28 shows a compositional bias: polar residues. Residues leucine 19–glutamine 416 are disordered. Serine 24 carries the post-translational modification Phosphoserine. Residues glycine 34 to proline 47 are compositionally biased toward low complexity. Composition is skewed to pro residues over residues glutamine 48–glutamine 104 and arginine 112–glutamine 165. At serine 52 the chain carries Phosphoserine. Repeat copies occupy residues proline 53–proline 72, proline 74–proline 93, proline 94–serine 113, proline 114–proline 133, proline 135–proline 154, proline 155–arginine 174, proline 176–proline 195, proline 197–proline 216, proline 217–arginine 236, proline 238–proline 257, proline 259–proline 278, proline 279–arginine 298, proline 300–proline 319, proline 321–proline 340, and proline 341–arginine 360. Residues proline 53 to arginine 360 are 15 X 20 AA approximate tandem repeats of P-P-G-K-P-Q-G-P-P-P-Q-G-[GD]-[NKS]-[KSQ]-[PRS]-[QRS] [GPS]-[PSAR]-[PSR]. Residue asparagine 168 is glycosylated (N-linked (GlcNAc...) asparagine). Positions proline 177–glutamine 227 are enriched in pro residues. Asparagine 230 carries N-linked (GlcNAc...) asparagine glycosylation. O-linked (Hex) serine glycosylation occurs at serine 232. Residues proline 239–glutamine 289 are compositionally biased toward pro residues. An N-linked (GlcNAc...) asparagine glycan is attached at asparagine 272. Low complexity predominate over residues glycine 290 to proline 300. Pro residues-rich tracts occupy residues proline 301–glutamine 351 and glutamine 378–glutamine 416.

In terms of processing, N- and O-glycosylated. In head and neck cancer patients, O-glycosylated with glucosylgalactosyl carbohydrate moiety. This modification would require prior hydroxylation on the lysine residue. Post-translationally, proteolytically cleaved at the tripeptide Xaa-Pro-Gln, where Xaa in the P(3) position is mostly lysine. The endoprotease may be of microbial origin. Pyroglutamate formation occurs on terminal Gln residues of cleaved peptides. Pyroglutamate formation found on at least Gln-398 and Gln-400.

The protein localises to the secreted. In Homo sapiens (Human), this protein is Basic salivary proline-rich protein 2 (PRB2).